The following is a 393-amino-acid chain: MSSTVSNPQGILQPGSFLLPESESMKKEEAELVSVCWNQDSSCFAAGTSHGFRIYNCEPFKETFRRELKDGGFKIVEMLFRSNILALVGGGPNSQYPSSKVLIWDDHQSRCISEFAFRSEIRAVKLRRDRIVVVLEHKIYVYNFMDLRLLHQIETQANPRGLCCLSHHSNTSVLACPGLNRGEIRVEHFGLNMVQIINAHDSSIACMTLTLDGLLLATASTKGTLIRIFNTMDGTRLQEVRRGVDRADIYSIALSPNVQWLAVSSDKGTVHIFSLRVRVVGEDSYSTENGALLTQQNYSNSLQGLVSPTIGTNPGSSLSFMRGVLPKYFSSEWSYAQFHVSEVTQFFAAFGSNNTVAIIGMDGSFYRCSFDPVNGGEMGQLEYIHFMKMDNRP.

WD repeat units lie at residues Lys-27–Arg-65, Asp-70–Glu-114, Ala-199–Glu-239, and Val-244–Asp-283.

It belongs to the WD repeat PROPPIN family. Component of the PI(3,5)P2 regulatory complex at least composed of ATG18, SAC/FIG4, FAB1 and VAC14. Expressed in roots, stems, flowers and leaves.

It is found in the preautophagosomal structure membrane. The protein localises to the vacuole membrane. The PI(3,5)P2 regulatory complex regulates both the synthesis and turnover of phosphatidylinositol 3,5-bisphosphate (PtdIns(3,5)P2). Required for autophagy. This is Autophagy-related protein 18c (ATG18C) from Arabidopsis thaliana (Mouse-ear cress).